The chain runs to 317 residues: MVVSLKGRDLLCLQDYTPEEIWTILETAKMLKIWQKIGKPHRLLEGKTLAMIFQKPSTRTRVSFEVAMAHLGGHALYLNAQDLQLRRGETIADTARVLSRYVDAIMARVYDHKDVEDLAKYASVPVINGLSDFSHPCQALADYMTIWEKKGTIKGVKVVYVGDGNNVAHSLMIAGTKLGADVVVATPEGYEPDEKVIKWAEQNAAESGGSFELLHDPVKAVKDADVIYTDVWASMGQEAEAEERRKIFRPFQVNKDLVKHAKPDYMFMHCLPAHRGEEVTDDVIDSPNSVVWDEAENRLHAQKAVLALLLGGVKTGF.

Residues 57 to 60, Q84, R108, and 135 to 138 contribute to the carbamoyl phosphate site; these read STRT and HPCQ. L-ornithine-binding positions include N166, D230, and 234–235; that span reads SM. Carbamoyl phosphate contacts are provided by residues 270–271 and R298; that span reads CL.

Belongs to the aspartate/ornithine carbamoyltransferase superfamily. OTCase family. In terms of assembly, homododecamer.

It localises to the cytoplasm. It carries out the reaction carbamoyl phosphate + L-ornithine = L-citrulline + phosphate + H(+). The protein operates within amino-acid biosynthesis; L-arginine biosynthesis; L-arginine from L-ornithine and carbamoyl phosphate: step 1/3. Its function is as follows. Reversibly catalyzes the transfer of the carbamoyl group from carbamoyl phosphate (CP) to the N(epsilon) atom of ornithine (ORN) to produce L-citrulline. The polypeptide is Ornithine carbamoyltransferase (Pyrococcus abyssi (strain GE5 / Orsay)).